Here is a 274-residue protein sequence, read N- to C-terminus: Bis(5'-nucleosyl)-tetraphosphatase, symmetrical (274 aa).

This sequence belongs to the Ap4A hydrolase family.

It catalyses the reaction P(1),P(4)-bis(5'-adenosyl) tetraphosphate + H2O = 2 ADP + 2 H(+). Its function is as follows. Hydrolyzes diadenosine 5',5'''-P1,P4-tetraphosphate to yield ADP. The chain is Bis(5'-nucleosyl)-tetraphosphatase, symmetrical from Shewanella putrefaciens (strain CN-32 / ATCC BAA-453).